A 98-amino-acid polypeptide reads, in one-letter code: uncharacterized protein (98 aa).

The signal sequence occupies residues 1–19; the sequence is MTERRRALSLAAVVDSINL. The segment at 40–98 is disordered; sequence PPGGSFSGIKRESRRKRPSRNEIYGGGVLEQEVRMRRWSKTASPPVSLHHRPLGPARKP. Positions 87–98 are enriched in basic residues; that stretch reads LHHRPLGPARKP.

This is an uncharacterized protein from Homo sapiens (Human).